We begin with the raw amino-acid sequence, 256 residues long: Enolase-phosphatase E1 (256 aa).

Mg(2+) contacts are provided by Asp14 and Glu16. Residues 142–143 and Lys176 contribute to the substrate site; that span reads SS. A Mg(2+)-binding site is contributed by Asp201.

Belongs to the HAD-like hydrolase superfamily. MasA/MtnC family. As to quaternary structure, monomer. Mg(2+) serves as cofactor.

It localises to the cytoplasm. The protein localises to the nucleus. The catalysed reaction is 5-methylsulfanyl-2,3-dioxopentyl phosphate + H2O = 1,2-dihydroxy-5-(methylsulfanyl)pent-1-en-3-one + phosphate. The protein operates within amino-acid biosynthesis; L-methionine biosynthesis via salvage pathway; L-methionine from S-methyl-5-thio-alpha-D-ribose 1-phosphate: step 3/6. Its pathway is amino-acid biosynthesis; L-methionine biosynthesis via salvage pathway; L-methionine from S-methyl-5-thio-alpha-D-ribose 1-phosphate: step 4/6. Functionally, bifunctional enzyme that catalyzes the enolization of 2,3-diketo-5-methylthiopentyl-1-phosphate (DK-MTP-1-P) into the intermediate 2-hydroxy-3-keto-5-methylthiopentenyl-1-phosphate (HK-MTPenyl-1-P), which is then dephosphorylated to form the acireductone 1,2-dihydroxy-3-keto-5-methylthiopentene (DHK-MTPene). This chain is Enolase-phosphatase E1, found in Drosophila yakuba (Fruit fly).